The following is a 363-amino-acid chain: uncharacterized protein (363 aa).

A run of 7 helical transmembrane segments spans residues 20-40 (WFFT…NTNI), 63-83 (INFA…FLVM), 101-121 (FPLI…GVQS), 141-161 (SVWQ…FTAF), 186-206 (FSLL…IMLA), 227-247 (IFKY…CVVL), and 268-288 (FLIV…WYVL). The disordered stretch occupies residues 329 to 363 (PRADLTPNDTLHMESKKKPLSQSPRVVIEEEDVAE).

It localises to the membrane. This is an uncharacterized protein from Caenorhabditis elegans.